The sequence spans 146 residues: Leghemoglobin (146 aa).

Residues 3–146 (AFTEKQEALV…FAAGIKKAYA (144 aa)) form the Globin domain. Tyr26 and Tyr31 each carry nitrated tyrosine. Ser46 is a binding site for heme b. Position 46 is a phosphoserine (Ser46). An O2-binding site is contributed by His62. The heme b site is built by His93 and Lys96. Tyr134 is subject to Nitrated tyrosine.

Belongs to the plant globin family. As to quaternary structure, monomer. Post-translationally, nitrated mainly at Tyr-31 and, to a lower extent, at Tyr-26 and Tyr-134, in effective nodules and particularly in hypoxic conditions; this mechanism may play a protective role in the symbiosis by buffering toxic peroxynitrite NO(2)(-). Nitration level decrease during nodule senescence. In terms of processing, phosphorylation at Ser-46 disrupts the molecular environment of its porphyrin ring oxygen binding pocket, thus leading to a reduced oxygen consumption and to the delivery of oxygen O(2) to symbiosomes. As to expression, root nodules.

Its subcellular location is the cytoplasm. It localises to the cytosol. The protein localises to the nucleus. Leghemoglobin that reversibly binds oxygen O(2) through a pentacoordinated heme iron. In root nodules, facilitates the diffusion of oxygen to the bacteroids while preventing the bacterial nitrogenase from being inactivated by buffering dioxygen, nitric oxide and carbon monoxide, and promoting the formation of reactive oxygen species (ROS, e.g. H(2)O(2)). This role is essential for symbiotic nitrogen fixation (SNF). The polypeptide is Leghemoglobin (Phaseolus vulgaris (Kidney bean)).